A 50-amino-acid chain; its full sequence is Insulin (50 aa).

Cystine bridges form between C7/C36, C19/C49, and C35/C40.

It belongs to the insulin family. As to quaternary structure, heterodimer of a B chain and an A chain linked by two disulfide bonds.

It is found in the secreted. In terms of biological role, insulin decreases blood glucose concentration. It increases cell permeability to monosaccharides, amino acids and fatty acids. It accelerates glycolysis, the pentose phosphate cycle, and glycogen synthesis in liver. The polypeptide is Insulin (ins) (Myoxocephalus scorpius (Shorthorn sculpin)).